A 372-amino-acid polypeptide reads, in one-letter code: Cobalt-precorrin-5B C(1)-methyltransferase (372 aa).

This sequence belongs to the CbiD family.

The catalysed reaction is Co-precorrin-5B + S-adenosyl-L-methionine = Co-precorrin-6A + S-adenosyl-L-homocysteine. The protein operates within cofactor biosynthesis; adenosylcobalamin biosynthesis; cob(II)yrinate a,c-diamide from sirohydrochlorin (anaerobic route): step 6/10. In terms of biological role, catalyzes the methylation of C-1 in cobalt-precorrin-5B to form cobalt-precorrin-6A. The protein is Cobalt-precorrin-5B C(1)-methyltransferase of Prochlorococcus marinus subsp. pastoris (strain CCMP1986 / NIES-2087 / MED4).